The sequence spans 262 residues: Tryptophan synthase alpha chain (262 aa).

Residues Glu-49 and Asp-60 each act as proton acceptor in the active site.

Belongs to the TrpA family. As to quaternary structure, tetramer of two alpha and two beta chains.

It carries out the reaction (1S,2R)-1-C-(indol-3-yl)glycerol 3-phosphate + L-serine = D-glyceraldehyde 3-phosphate + L-tryptophan + H2O. Its pathway is amino-acid biosynthesis; L-tryptophan biosynthesis; L-tryptophan from chorismate: step 5/5. Its function is as follows. The alpha subunit is responsible for the aldol cleavage of indoleglycerol phosphate to indole and glyceraldehyde 3-phosphate. This chain is Tryptophan synthase alpha chain, found in Thermoanaerobacter pseudethanolicus (strain ATCC 33223 / 39E) (Clostridium thermohydrosulfuricum).